Here is a 240-residue protein sequence, read N- to C-terminus: Ribonuclease P protein component 3 (240 aa).

Belongs to the eukaryotic/archaeal RNase P protein component 3 family. Consists of a catalytic RNA component and at least 4-5 protein subunits.

The protein resides in the cytoplasm. The enzyme catalyses Endonucleolytic cleavage of RNA, removing 5'-extranucleotides from tRNA precursor.. Its function is as follows. Part of ribonuclease P, a protein complex that generates mature tRNA molecules by cleaving their 5'-ends. The sequence is that of Ribonuclease P protein component 3 from Halorubrum lacusprofundi (strain ATCC 49239 / DSM 5036 / JCM 8891 / ACAM 34).